A 223-amino-acid polypeptide reads, in one-letter code: Probable iron-sulfur cluster repair protein HI_1677 (223 aa).

It belongs to the RIC family.

Its subcellular location is the cytoplasm. Its function is as follows. Di-iron-containing protein involved in the repair of iron-sulfur clusters. The sequence is that of Probable iron-sulfur cluster repair protein HI_1677 from Haemophilus influenzae (strain ATCC 51907 / DSM 11121 / KW20 / Rd).